Consider the following 220-residue polypeptide: Probable 26S proteasome regulatory subunit p27 (220 aa).

Residues 119-196 (ARRNNDDQAI…PVLLLREGQI (78 aa)) enclose the PDZ domain.

This sequence belongs to the proteasome subunit p27 family. As to quaternary structure, part of a transient complex containing NAS2, RPT4 and RPT5 formed during the assembly of the 26S proteasome.

Its function is as follows. Acts as a chaperone during the assembly of the 26S proteasome, specifically of the base subcomplex of the 19S regulatory complex (RC). During the base subcomplex assembly is part of a NAS2:RPT4:RPT5 module; NAS2 is released during the further base assembly process. This is Probable 26S proteasome regulatory subunit p27 (NAS2) from Saccharomyces cerevisiae (strain ATCC 204508 / S288c) (Baker's yeast).